The sequence spans 861 residues: Bifunctional uridylyltransferase/uridylyl-removing enzyme (861 aa).

The uridylyltransferase stretch occupies residues 1-322 (MHTAAAATPA…FPTELGITRT (322 aa)). Residues 323–679 (INGRFVERQG…ARISPVGEGL (357 aa)) form a uridylyl-removing region. An HD domain is found at 441–557 (VDQHILMVVR…RHFADQVGSE (117 aa)). ACT domains are found at residues 680–763 (QVAV…AEPP) and 792–861 (LLSL…ALAI).

This sequence belongs to the GlnD family. The cofactor is Mg(2+).

The catalysed reaction is [protein-PII]-L-tyrosine + UTP = [protein-PII]-uridylyl-L-tyrosine + diphosphate. It catalyses the reaction [protein-PII]-uridylyl-L-tyrosine + H2O = [protein-PII]-L-tyrosine + UMP + H(+). Its activity is regulated as follows. Uridylyltransferase (UTase) activity is inhibited by glutamine, while glutamine activates uridylyl-removing (UR) activity. In terms of biological role, modifies, by uridylylation and deuridylylation, the PII regulatory proteins (GlnB and homologs), in response to the nitrogen status of the cell that GlnD senses through the glutamine level. Under low glutamine levels, catalyzes the conversion of the PII proteins and UTP to PII-UMP and PPi, while under higher glutamine levels, GlnD hydrolyzes PII-UMP to PII and UMP (deuridylylation). Thus, controls uridylylation state and activity of the PII proteins, and plays an important role in the regulation of nitrogen assimilation and metabolism. In Ralstonia nicotianae (strain ATCC BAA-1114 / GMI1000) (Ralstonia solanacearum), this protein is Bifunctional uridylyltransferase/uridylyl-removing enzyme.